A 167-amino-acid polypeptide reads, in one-letter code: Protein DLS1 (167 aa).

Ser17 carries the post-translational modification Phosphoserine.

In terms of assembly, component of the ISW2 complex, which at least consists of ISW2, ITC1, DLS1 and DPB4.

Its subcellular location is the nucleus. In terms of biological role, functions as a component of the ISW2 complex, which acts in remodeling the chromatin by catalyzing an ATP-dependent alteration in the structure of nucleosomal DNA. The ISW2 complex is involved in coordinating transcriptional repression and in inheritance of telomeric silencing. It is involved in repression of MAT a-specific genes, INO1, and early meiotic genes during mitotic growth dependent upon transcription factor UME6 and in a parallel pathway to the RPD3-SIN3 histone deacetylase complex. DLS1 is partially required for the ISW2 complex chromatin remodeling activity and is not required for its interaction with chromatin. The protein is Protein DLS1 (DLS1) of Saccharomyces cerevisiae (strain ATCC 204508 / S288c) (Baker's yeast).